We begin with the raw amino-acid sequence, 523 residues long: Nuclear receptor ROR-alpha (523 aa).

The segment covering 1–26 (MESAPAAPDPAASEPGSSGSEAAAGS) has biased composition (low complexity). The interval 1-63 (MESAPAAPDP…SRGISVTKKT (63 aa)) is disordered. Lys38 carries the post-translational modification N6-methyllysine. 2 NR C4-type zinc fingers span residues 73–93 (CKICGDKSSGIHYGVITCEGC) and 109–133 (CPRQKNCLIDRTSRNRCQHCRLQKC). Positions 73 to 138 (CKICGDKSSG…RLQKCLAVGM (66 aa)) form a DNA-binding region, nuclear receptor. The segment at 154 to 183 (DSLYAEVQKHRMQQQQRDHQQQPGEAEPLT) is disordered. At Thr183 the chain carries Phosphothreonine; by MAPK1. A Glycyl lysine isopeptide (Lys-Gly) (interchain with G-Cter in SUMO) cross-link involves residue Lys240. The region spanning 272 to 510 (ELEHLAQNIS…LHFPPLYKEL (239 aa)) is the NR LBD domain. The AF-2 signature appears at 506 to 511 (LYKELF).

It belongs to the nuclear hormone receptor family. NR1 subfamily. Monomer. Interacts (via the DNA-binding domain) with HIF1A; the interaction enhances HIF1A transcription under hypoxia through increasing protein stability. Interacts with CEBPB; the interaction disrupts the interaction CEBPB:EP300. Interacts with the coactivators NCOA2, PPARGC1A (via LXXLL motif), EP300 and MED1. Interacts with the corepressor NCOR1. Interacts with MAGED1 and CTNNB1. Interacts with CRY1 and PER2. Interacts (via AF-2 motif) with PROX1. Interacts with NRIP1. Isoform 4 interacts (via AF-2 motif) with isoform 1 of FOXP3 (via LXXLL motif). In terms of processing, phosphorylation by conventional PKCs in neurons inhibits transcriptional activity. Phosphorylated on Thr-183 by MAPK1/ERK1 in vitro. Post-translationally, sumoylated by SENP1 and SENP2. Sumoylation, promoted by PIAS2, PIAS3, PIAS4 but not PIAS1, enhances the transcriptional activity. Desumoylated by SENP1. Ubiquitinated, leading to its degradation by the proteasome. Proteasomal degradation is required for efficient transcriptional activity and is prevented by HR. In terms of processing, monomethylated at Lys-38 by EZH2, this creates a degron recognized by a DCX (DDB1-DCAF1/VPRBP-CUL4A-RBX1) E3 ubiquitin ligase complex. As to expression, expressed in cerebellum, heart, liver, lung, kidney, retina and brown and white adipose tissues. Expressed in the subset of mature Th17 cells.

It localises to the nucleus. Functionally, nuclear receptor that binds DNA as a monomer to ROR response elements (RORE) containing a single core motif half-site 5'-AGGTCA-3' preceded by a short A-T-rich sequence. Key regulator of embryonic development, cellular differentiation, immunity, circadian rhythm as well as lipid, steroid, xenobiotics and glucose metabolism. Considered to have intrinsic transcriptional activity, have some natural ligands like oxysterols that act as agonists (25-hydroxycholesterol) or inverse agonists (7-oxygenated sterols), enhancing or repressing the transcriptional activity, respectively. Recruits distinct combinations of cofactors to target genes regulatory regions to modulate their transcriptional expression, depending on the tissue, time and promoter contexts. Regulates genes involved in photoreceptor development including OPN1SW, OPN1SM and ARR3 and skeletal muscle development with MYOD1. Required for proper cerebellum development, regulates SHH gene expression, among others, to induce granule cells proliferation as well as expression of genes involved in calcium-mediated signal transduction. Regulates the circadian expression of several clock genes, including CLOCK, BMAL1, NPAS2 and CRY1. Competes with NR1D1 for binding to their shared DNA response element on some clock genes such as BMAL1, CRY1 and NR1D1 itself, resulting in NR1D1-mediated repression or RORA-mediated activation of clock genes expression, leading to the circadian pattern of clock genes expression. Therefore influences the period length and stability of the clock. Regulates genes involved in lipid metabolism such as apolipoproteins APOA1, APOA5, APOC3 and PPARG. In liver, has specific and redundant functions with RORC as positive or negative modulator of expression of genes encoding phase I and phase II proteins involved in the metabolism of lipids, steroids and xenobiotics, such as CYP7B1 and SULT2A1. Induces a rhythmic expression of some of these genes. In addition, interplays functionally with NR1H2 and NR1H3 for the regulation of genes involved in cholesterol metabolism. Also involved in the regulation of hepatic glucose metabolism through the modulation of G6PC1 and PCK1. In adipose tissue, plays a role as negative regulator of adipocyte differentiation, probably acting through dual mechanisms. May suppress CEBPB-dependent adipogenesis through direct interaction and PPARG-dependent adipogenesis through competition for DNA-binding. Downstream of IL6 and TGFB and synergistically with RORC isoform 2, is implicated in the lineage specification of uncommitted CD4(+) T-helper (T(H)) cells into T(H)17 cells, antagonizing the T(H)1 program. Probably regulates IL17 and IL17F expression on T(H) by binding to the essential enhancer conserved non-coding sequence 2 (CNS2) in the IL17-IL17F locus. Involved in hypoxia signaling by interacting with and activating the transcriptional activity of HIF1A. May inhibit cell growth in response to cellular stress. May exert an anti-inflammatory role by inducing CHUK expression and inhibiting NF-kappa-B signaling. The sequence is that of Nuclear receptor ROR-alpha (Rora) from Mus musculus (Mouse).